The primary structure comprises 626 residues: PEX5-related protein (626 aa).

Disordered regions lie at residues 1 to 20 (MYQG…LSSD), 118 to 167 (VSQT…SSLD), and 181 to 235 (KFHG…ASEL). Basic and acidic residues predominate over residues 181–198 (KFHGDRNTKGHPMAERKS). S205 is modified (phosphoserine). Residues 225-235 (SALNSESASEL) show a composition bias toward low complexity. Phosphoserine is present on residues S253, S257, and S261. TPR repeat units lie at residues 326–359 (WPGA…DPGD), 360–393 (AEAW…QPNN), and 395–427 (KALM…NPKY). Residues S445 and S447 each carry the phosphoserine modification. TPR repeat units follow at residues 474 to 507 (PDLQ…RPED), 509 to 541 (SLWN…QPGF), and 543 to 575 (RSRY…QRKS).

Belongs to the peroxisomal targeting signal receptor family. As to quaternary structure, interacts with RAB8B. Forms an obligate 4:4 complex with HCN2. May interact with the C-terminal PTS1-type tripeptide peroxisomal targeting signal (SKL-type); the relevance of such interaction is however unclear. Interacts with HCN3. Interacts with HCN4 with a 4:4 HCN4:PEX5L stoichiometry; reduces the effects of cAMP on the voltage-dependence and rate of activation of HCN4. In terms of tissue distribution, mainly expressed in brain. Also expressed in pancreas, testis and pituitary.

The protein resides in the cytoplasm. It is found in the membrane. Functionally, accessory subunit of hyperpolarization-activated cyclic nucleotide-gated (HCN) channels, regulating their cell-surface expression and cyclic nucleotide dependence. This chain is PEX5-related protein (PEX5L), found in Homo sapiens (Human).